The following is a 307-amino-acid chain: Probable rRNA-processing protein EBP2 homolog (307 aa).

3 disordered regions span residues 1–22, 189–208, and 236–307; these read MSDF…SDAE, QRKM…EAEK, and ESKQ…KGRK. The stretch at 205 to 252 forms a coiled coil; that stretch reads EAEKKDMLDKLKKFRKGKLKNLDFLEDAKALESKQKQSAENRKKRNKK. Residues 236–245 show a composition bias toward basic and acidic residues; sequence ESKQKQSAEN. Composition is skewed to basic residues over residues 246–266 and 294–307; these read RKKR…KRNT and RLGK…KGRK.

Belongs to the EBP2 family.

The protein resides in the nucleus. Its subcellular location is the nucleolus. Its function is as follows. Required for the processing of the 27S pre-rRNA. The sequence is that of Probable rRNA-processing protein EBP2 homolog from Drosophila melanogaster (Fruit fly).